A 361-amino-acid chain; its full sequence is 3-dehydroquinate synthase (361 aa).

NAD(+) is bound by residues 106 to 110 (GVVGD), 130 to 131 (TT), Lys-143, and Lys-152. Residues Glu-185, His-248, and His-265 each coordinate Zn(2+).

It belongs to the sugar phosphate cyclases superfamily. Dehydroquinate synthase family. The cofactor is NAD(+). It depends on Co(2+) as a cofactor. Zn(2+) serves as cofactor.

It is found in the cytoplasm. It catalyses the reaction 7-phospho-2-dehydro-3-deoxy-D-arabino-heptonate = 3-dehydroquinate + phosphate. It functions in the pathway metabolic intermediate biosynthesis; chorismate biosynthesis; chorismate from D-erythrose 4-phosphate and phosphoenolpyruvate: step 2/7. In terms of biological role, catalyzes the conversion of 3-deoxy-D-arabino-heptulosonate 7-phosphate (DAHP) to dehydroquinate (DHQ). This is 3-dehydroquinate synthase from Leptospira interrogans serogroup Icterohaemorrhagiae serovar copenhageni (strain Fiocruz L1-130).